The primary structure comprises 298 residues: Quinolinate synthase (298 aa).

Residues His19 and Ser36 each contribute to the iminosuccinate site. [4Fe-4S] cluster is bound at residue Cys81. Iminosuccinate is bound by residues 107-109 and Ser124; that span reads YVN. Residue Cys168 participates in [4Fe-4S] cluster binding. Iminosuccinate-binding positions include 193–195 and Thr210; that span reads HPE. Cys254 serves as a coordination point for [4Fe-4S] cluster.

It belongs to the quinolinate synthase family. Type 2 subfamily. The cofactor is [4Fe-4S] cluster.

The protein resides in the cytoplasm. The enzyme catalyses iminosuccinate + dihydroxyacetone phosphate = quinolinate + phosphate + 2 H2O + H(+). Its pathway is cofactor biosynthesis; NAD(+) biosynthesis; quinolinate from iminoaspartate: step 1/1. With respect to regulation, inhibited by 4,5 dithiohydroxyphthalic acid (DTHPA) analogs, which bind to the catalytic iron site of the [4Fe-4S] cluster. In terms of biological role, catalyzes the condensation of iminoaspartate with dihydroxyacetone phosphate to form quinolinate. This Thermotoga maritima (strain ATCC 43589 / DSM 3109 / JCM 10099 / NBRC 100826 / MSB8) protein is Quinolinate synthase.